A 581-amino-acid chain; its full sequence is Arginine--tRNA ligase (581 aa).

A 'HIGH' region motif is present at residues 123 to 133 (PNVAKEMHVGH).

It belongs to the class-I aminoacyl-tRNA synthetase family. Monomer.

It is found in the cytoplasm. The catalysed reaction is tRNA(Arg) + L-arginine + ATP = L-arginyl-tRNA(Arg) + AMP + diphosphate. This chain is Arginine--tRNA ligase, found in Blochmanniella pennsylvanica (strain BPEN).